A 249-amino-acid polypeptide reads, in one-letter code: Type I iodothyronine deiodinase (249 aa).

Topologically, residues 1–12 are extracellular; sequence MGLPRPGLWLKR. A helical; Signal-anchor for type III membrane protein membrane pass occupies residues 13-33; it reads LWVLVQVAVEVAVGKVLMTLF. At 34-249 the chain is on the cytoplasmic side; it reads PERVKQNILA…VRAVLEELHS (216 aa). Residue Sec-126 is part of the active site. Residue Sec-126 is a non-standard amino acid, selenocysteine.

This sequence belongs to the iodothyronine deiodinase family. In terms of assembly, predominantly monomer. Can form homodimers but homodimerization is not essential for enzyme activity.

It localises to the cell membrane. The protein localises to the endoplasmic reticulum membrane. Its subcellular location is the basolateral cell membrane. It carries out the reaction 3,3',5-triiodo-L-thyronine + iodide + A + H(+) = L-thyroxine + AH2. The enzyme catalyses 3,3',5'-triiodo-L-thyronine + iodide + A + H(+) = L-thyroxine + AH2. The catalysed reaction is 3,3'-diiodo-L-thyronine + iodide + A + H(+) = 3,3',5'-triiodo-L-thyronine + AH2. It catalyses the reaction 3,3'-diiodo-L-thyronine + iodide + A + H(+) = 3,3',5-triiodo-L-thyronine + AH2. It carries out the reaction 3'-iodo-L-thyronine + iodide + A + H(+) = 3',5'-diiodo-L-thyronine + AH2. The enzyme catalyses 3-iodo-L-thyronine + iodide + A + H(+) = 3,5-diiodo-L-thyronine + AH2. The catalysed reaction is 3-iodo-L-thyronine + iodide + A + H(+) = 3,3'-diiodo-L-thyronine + AH2. It catalyses the reaction 3,3'-diiodothyronamine + iodide + A + H(+) = 3,3',5'-triiodothyronamine + AH2. It carries out the reaction 3'-iodothyronamine + iodide + A + H(+) = 3',5'-diiodothyronamine + AH2. The enzyme catalyses 3-iodothyronamine + iodide + A + H(+) = 3,3'-diiodothyronamine + AH2. The catalysed reaction is 3,3'-diiodothyronamine + iodide + A + H(+) = 3,3',5-triiodothyronamine + AH2. It catalyses the reaction 3-iodothyronamine + iodide + A + H(+) = 3,5-diiodothyronamine + AH2. It carries out the reaction 3,3'-diiodo-L-thyronine sulfate + iodide + A + H(+) = 3,3',5'-triiodo-L-thyronine sulfate + AH2. The enzyme catalyses 3,3',5'-triiodo-L-thyronine sulfate + iodide + A + H(+) = L-thyroxine sulfate + AH2. The catalysed reaction is 3,3'-diiodo-L-thyronine sulfate + iodide + A + H(+) = 3,3',5-triiodo-L-thyronine sulfate + AH2. Functionally, plays a crucial role in the metabolism of thyroid hormones (TH) and has specific roles in TH activation and inactivation by deiodination. Catalyzes the deiodination of L-thyroxine (T4) to 3,5,3'-triiodothyronine (T3) via outer-ring deiodination (ORD) and of T4 to 3,3',5'-triiodothyronine (rT3) via inner-ring deiodination (IRD). Catalyzes the deiodiantion of rT3 to 3,3'-diiodothyronine (3,3'-T2) and 3',5'-diiodothyronine (3',5'-T2) to 3'-monoiodothyronine (3'-T1) via ORD. Catalyzes the deiodination of T3 to 3,3'-T2, 3,5-diiodothyronine (3,5-T2) to 3-monoiodothyronine (3-T1) and 3,3'-T2 to 3-T1 via IRD. Catalyzes the phenolic ring deiodinations of 3,3',5'-triiodothyronamine, 3',5'-diiodothyronamine and 3,3'-diiodothyronamine as well as tyrosyl ring deiodinations of 3,5,3'-triiodothyronamine and 3,5-diiodothyronamine. Catalyzes the deiodination of L-thyroxine sulfate and 3,3',5-triiodo-L-thyronine sulfate via IRD and of 3,3',5'-triiodo-L-thyronine sulfate via ORD. This chain is Type I iodothyronine deiodinase (DIO1), found in Oryctolagus cuniculus (Rabbit).